The sequence spans 407 residues: Tryptophan 2,3-dioxygenase B (407 aa).

Substrate-binding positions include 71 to 75 (FIVTH) and R143. A heme-binding site is contributed by H327. Substrate is bound at residue T341.

The protein belongs to the tryptophan 2,3-dioxygenase family. In terms of assembly, homotetramer. Dimer of dimers. Heme serves as cofactor.

The catalysed reaction is L-tryptophan + O2 = N-formyl-L-kynurenine. It functions in the pathway amino-acid degradation; L-tryptophan degradation via kynurenine pathway; L-kynurenine from L-tryptophan: step 1/2. In terms of biological role, heme-dependent dioxygenase that catalyzes the oxidative cleavage of the L-tryptophan (L-Trp) pyrrole ring and converts L-tryptophan to N-formyl-L-kynurenine. Catalyzes the oxidative cleavage of the indole moiety. This Danio rerio (Zebrafish) protein is Tryptophan 2,3-dioxygenase B.